A 207-amino-acid polypeptide reads, in one-letter code: Ribosomal RNA small subunit methyltransferase G (207 aa).

S-adenosyl-L-methionine-binding positions include Gly-75, Leu-80, 126–127, and Arg-141; that span reads VE.

Belongs to the methyltransferase superfamily. RNA methyltransferase RsmG family.

It is found in the cytoplasm. The enzyme catalyses guanosine(527) in 16S rRNA + S-adenosyl-L-methionine = N(7)-methylguanosine(527) in 16S rRNA + S-adenosyl-L-homocysteine. Functionally, specifically methylates the N7 position of guanine in position 527 of 16S rRNA. The polypeptide is Ribosomal RNA small subunit methyltransferase G (Psychromonas ingrahamii (strain DSM 17664 / CCUG 51855 / 37)).